Reading from the N-terminus, the 113-residue chain is Beta-defensin 112 (113 aa).

Intrachain disulfides connect C54–C82, C61–C75, and C65–C83.

This sequence belongs to the beta-defensin family.

The protein resides in the secreted. Its function is as follows. Has antibacterial activity. The sequence is that of Beta-defensin 112 (DEFB112) from Homo sapiens (Human).